Consider the following 512-residue polypeptide: Lysine--tRNA ligase (512 aa).

Positions 408 and 415 each coordinate Mg(2+).

It belongs to the class-II aminoacyl-tRNA synthetase family. In terms of assembly, homodimer. The cofactor is Mg(2+).

It is found in the cytoplasm. It catalyses the reaction tRNA(Lys) + L-lysine + ATP = L-lysyl-tRNA(Lys) + AMP + diphosphate. This Prochlorococcus marinus (strain MIT 9312) protein is Lysine--tRNA ligase.